Consider the following 327-residue polypeptide: Vacuolar protein sorting-associated protein 26A (327 aa).

Residues 306–327 (RTNFHQRFESPESQASAEQPEM) are disordered. Residue S315 is modified to Phosphoserine. Positions 316–327 (PESQASAEQPEM) are enriched in polar residues.

This sequence belongs to the VPS26 family. In terms of assembly, component of the heterotrimeric retromer cargo-selective complex (CSC), also described as vacuolar protein sorting subcomplex (VPS), formed by VPS26 (VPS26A or VPS26B), VPS29 and VPS35. The CSC has a highly elongated structure with VPS26 and VPS29 binding independently at opposite distal ends of VPS35 as central platform. The CSC is believed to associate with variable sorting nexins to form functionally distinct retromer complex variants. The originally described retromer complex (also called SNX-BAR retromer) is a pentamer containing the CSC and a heterodimeric membrane-deforming subcomplex formed between SNX1 or SNX2 and SNX5 or SNX6 (also called SNX-BAR subcomplex); the respective CSC and SNX-BAR subcomplexes associate with low affinity. The CSC associates with SNX3 to form a SNX3-retromer complex. The CSC associates with SNX27, the WASH complex and the SNX-BAR subcomplex to form the SNX27-retromer complex. Interacts with VPS29, VPS35, SNX27, SNX1, SNX2, SNX5, SNX6, SNX3, RAB7A, ECPAS, EHD1, WASHC5, SORL1.

It is found in the cytoplasm. Its subcellular location is the endosome membrane. The protein localises to the early endosome. Its function is as follows. Acts as a component of the retromer cargo-selective complex (CSC). The CSC is believed to be the core functional component of retromer or respective retromer complex variants acting to prevent missorting of selected transmembrane cargo proteins into the lysosomal degradation pathway. The recruitment of the CSC to the endosomal membrane involves RAB7A and SNX3. The SNX-BAR retromer mediates retrograde transport of cargo proteins from endosomes to the trans-Golgi network (TGN) and is involved in endosome-to-plasma membrane transport for cargo protein recycling. The SNX3-retromer mediates the retrograde endosome-to-TGN transport of WLS distinct from the SNX-BAR retromer pathway. The SNX27-retromer is believed to be involved in endosome-to-plasma membrane trafficking and recycling of a broad spectrum of cargo proteins. The CSC complex seems to act as recruitment hub for other proteins, such as the WASH complex and TBC1D5. Required for retrograde transport of lysosomal enzyme receptor IGF2R. Required to regulate transcytosis of the polymeric immunoglobulin receptor (pIgR-pIgA). Required for the endosomal localization of WASHC2 (indicative for the WASH complex). Required for the endosomal localization of TBC1D5. Mediates retromer cargo recognition of SORL1 and is involved in trafficking of SORL1 implicated in sorting and processing of APP. Involved in retromer-independent lysosomal sorting of F2R. Involved in recycling of ADRB2. Acts redundantly with VSP26B in SNX-27 mediated endocytic recycling of SLC2A1/GLUT1. Enhances the affinity of SNX27 for PDZ-binding motifs in cargo proteins. The sequence is that of Vacuolar protein sorting-associated protein 26A (Vps26a) from Rattus norvegicus (Rat).